The sequence spans 360 residues: MKDSIIAKLESLKERYEELEALLGDVSVISDQDKFRAYSKEYSQLEEVVKCFNRWTQLNQNIEEAEILLDDPEMKEMAQMEIEESKAEIEEVEQQLQILLLPKDPNDEYNCYLEIRAGTGGDEAGIFAGDLFRMYSRYAESKRWRVEMLSANESEQGGYKEVIVKVTGEGVYGQLKFESGGHRVQRVPKTESQGRIHTSACTVAVMPELPESEMPEINPADLRIDTYRSSGAGGQHVNTTDSAVRITHIPTGIVVECQDERSQHKNKAKAMSVLASRIVQAEQERQAAEQTDMRRNLLGSGDRSDKIRTYNYPQGRVTDHRINLTIYRLDEVMNGKIDELIQPIITEYQADQLAALSEQN.

Gln-235 bears the N5-methylglutamine mark. The span at 285–295 (RQAAEQTDMRR) shows a compositional bias: basic and acidic residues. A disordered region spans residues 285–309 (RQAAEQTDMRRNLLGSGDRSDKIRT).

The protein belongs to the prokaryotic/mitochondrial release factor family. In terms of processing, methylated by PrmC. Methylation increases the termination efficiency of RF1.

It is found in the cytoplasm. Functionally, peptide chain release factor 1 directs the termination of translation in response to the peptide chain termination codons UAG and UAA. This chain is Peptide chain release factor 1 (prfA), found in Haemophilus influenzae (strain ATCC 51907 / DSM 11121 / KW20 / Rd).